We begin with the raw amino-acid sequence, 303 residues long: Elongation factor Ts (303 aa).

The involved in Mg(2+) ion dislocation from EF-Tu stretch occupies residues 79-82; the sequence is TDFT.

This sequence belongs to the EF-Ts family.

Its subcellular location is the cytoplasm. In terms of biological role, associates with the EF-Tu.GDP complex and induces the exchange of GDP to GTP. It remains bound to the aminoacyl-tRNA.EF-Tu.GTP complex up to the GTP hydrolysis stage on the ribosome. This is Elongation factor Ts from Magnetococcus marinus (strain ATCC BAA-1437 / JCM 17883 / MC-1).